The primary structure comprises 478 residues: F-box protein YDR306C (478 aa).

The segment covering Met-1–Tyr-14 has biased composition (basic residues). 2 disordered regions span residues Met-1–Ala-32 and Arg-67–Ser-101. A compositionally biased stretch (low complexity) spans Gln-80 to Ser-90. Residues Lys-91–Ser-101 are compositionally biased toward basic and acidic residues. The F-box domain occupies Lys-112–Ala-173.

As to quaternary structure, interacts with SKP1. Component of the probable SCF(YDR306C) complex containing CDC53, SKP1, RBX1 and YDR306C. In terms of processing, autoubiquitinated by the E3 ubiquitin ligase complex in conjunction with the E2 enzyme CDC34.

Its pathway is protein modification; protein ubiquitination. Its function is as follows. Substrate recognition component of a SCF (SKP1-CUL1-F-box protein) E3 ubiquitin-protein ligase complex which mediates the ubiquitination and subsequent proteasomal degradation of target proteins. Probably recognizes and binds to phosphorylated target proteins. This Saccharomyces cerevisiae (strain ATCC 204508 / S288c) (Baker's yeast) protein is F-box protein YDR306C.